A 406-amino-acid chain; its full sequence is Putative 12-oxophytodienoate reductase 12 (406 aa).

Residues 41 to 43 (PLT), alanine 74, and glutamine 119 each bind FMN. Position 188–191 (188–191 (HAAN)) interacts with substrate. Residues arginine 240, glycine 317, and 338 to 339 (GR) contribute to the FMN site.

This sequence belongs to the NADH:flavin oxidoreductase/NADH oxidase family. FMN is required as a cofactor.

Functionally, putative oxophytodienoate reductase that may be involved in the biosynthesis or metabolism of oxylipin signaling molecules. The chain is Putative 12-oxophytodienoate reductase 12 (OPR12) from Oryza sativa subsp. japonica (Rice).